The following is a 693-amino-acid chain: Phosphoribosylformylglycinamidine synthase subunit PurL (693 aa).

The active site involves histidine 34. ATP-binding residues include tyrosine 37 and lysine 76. Position 78 (glutamate 78) interacts with Mg(2+). Substrate contacts are provided by residues 79 to 82 and arginine 101; that span reads SHNH. Histidine 80 (proton acceptor) is an active-site residue. Position 102 (aspartate 102) interacts with Mg(2+). Glutamine 222 contributes to the substrate binding site. Aspartate 248 is a binding site for Mg(2+). 292–294 is a binding site for substrate; it reads ETQ. Residues aspartate 470 and glycine 507 each coordinate ATP. Serine 510 contributes to the substrate binding site.

The protein belongs to the FGAMS family. In terms of assembly, monomer. Part of the FGAM synthase complex composed of 1 PurL, 1 PurQ and 2 PurS subunits.

The protein resides in the cytoplasm. The enzyme catalyses N(2)-formyl-N(1)-(5-phospho-beta-D-ribosyl)glycinamide + L-glutamine + ATP + H2O = 2-formamido-N(1)-(5-O-phospho-beta-D-ribosyl)acetamidine + L-glutamate + ADP + phosphate + H(+). The protein operates within purine metabolism; IMP biosynthesis via de novo pathway; 5-amino-1-(5-phospho-D-ribosyl)imidazole from N(2)-formyl-N(1)-(5-phospho-D-ribosyl)glycinamide: step 1/2. In terms of biological role, part of the phosphoribosylformylglycinamidine synthase complex involved in the purines biosynthetic pathway. Catalyzes the ATP-dependent conversion of formylglycinamide ribonucleotide (FGAR) and glutamine to yield formylglycinamidine ribonucleotide (FGAM) and glutamate. The FGAM synthase complex is composed of three subunits. PurQ produces an ammonia molecule by converting glutamine to glutamate. PurL transfers the ammonia molecule to FGAR to form FGAM in an ATP-dependent manner. PurS interacts with PurQ and PurL and is thought to assist in the transfer of the ammonia molecule from PurQ to PurL. This chain is Phosphoribosylformylglycinamidine synthase subunit PurL, found in Pyrobaculum calidifontis (strain DSM 21063 / JCM 11548 / VA1).